The primary structure comprises 542 residues: Phenylalanine--tRNA ligase beta subunit (542 aa).

The region spanning 269–344 is the B5 domain; that stretch reads LRRYTVSVSA…MTIGYDKLSP (76 aa). Positions 322, 328, 331, and 332 each coordinate Mg(2+).

This sequence belongs to the phenylalanyl-tRNA synthetase beta subunit family. Type 2 subfamily. In terms of assembly, tetramer of two alpha and two beta subunits. Requires Mg(2+) as cofactor.

The protein resides in the cytoplasm. It catalyses the reaction tRNA(Phe) + L-phenylalanine + ATP = L-phenylalanyl-tRNA(Phe) + AMP + diphosphate + H(+). The sequence is that of Phenylalanine--tRNA ligase beta subunit from Sulfolobus acidocaldarius (strain ATCC 33909 / DSM 639 / JCM 8929 / NBRC 15157 / NCIMB 11770).